A 114-amino-acid polypeptide reads, in one-letter code: Gas vesicle protein J (114 aa).

Positions 63–114 (PTGTDMERVEEAAGISPDESRSLDTRSESEQMDELPGEAGASVSNTAPQEEE) are disordered. Basic and acidic residues predominate over residues 80–91 (DESRSLDTRSES). Positions 104–114 (SVSNTAPQEEE) are enriched in polar residues.

Belongs to the gas vesicle GvpA family. GvpF to GvpM interact with each other in vitro, and may form multi-subunit complex(es). Interacts with GvpA.

The protein resides in the gas vesicle. In terms of biological role, a minor component of the gas vesicle, proteins GvpF to GvpM might be involved in nucleating gas vesicle formation. Gas vesicles are hollow, gas filled proteinaceous nanostructures found in some microorganisms. They allow positioning of halobacteria at the optimal depth for growth in the poorly aerated, shallow brine pools of their habitat. Its function is as follows. Expression of a 9.5 kb mc-vac DNA fragment containing 2 divergently transcribed regions (gvpD-gvpE-gvpF-gvpG-gvpH-gvpI-gvpJ-gvpK-gvpL-gvpM and gvpA-gvpC-gvpN-gvpO) allows H.volcanii to produce gas vesicles. This Haloferax mediterranei (strain ATCC 33500 / DSM 1411 / JCM 8866 / NBRC 14739 / NCIMB 2177 / R-4) (Halobacterium mediterranei) protein is Gas vesicle protein J.